Here is a 444-residue protein sequence, read N- to C-terminus: MEQATTLFILLSTLLLAVSVESPQPPLFPDEALPTKSGYLPVKPAPGSSMFYAFYEAQEPTTPLPDTPLLVWLQGGPGCSSMIGNFYELGPWRVVSRATDLERNPGAWNRLFGLLFVDNPIGVGFSIAASQQDIPTNQRQVAEHLYAALVEFLEQNPSFENRPVYFTGESYAGKYVPAIGYYILKEKPNGKVNLKGLAIGNGLTDPVTQVQTHAVNVYYSGLVNAKQRVELQKAQEISVALVKSQKWREAADARTELLTLLSNMTGLATLYNTARAIPYRTDLVVDLLNQREAKRVLGVSETVRFEECSDEVEDVLRADVMKSVKFMVEYALERTQVLLYQGMLDLRDGVVSTEEWMKTMNWSGLGMFSTAERRVWKDEDGVVAGYVQRWGNLCHVAVTGAGHFVPTDKAVNSRDMIEGWVLGKGLFGGKDVKQTTSSSLYHSI.

The signal sequence occupies residues 1–22 (MEQATTLFILLSTLLLAVSVES). Cysteines 79 and 308 form a disulfide. The active site involves Ser-170. A glycan (N-linked (GlcNAc...) asparagine) is linked at Asn-263. Asp-345 is a catalytic residue. Residue Asn-361 is glycosylated (N-linked (GlcNAc...) asparagine). Residue His-403 is part of the active site.

The protein belongs to the peptidase S10 family. Ubiquitous.

The protein localises to the secreted. Probable carboxypeptidase. The chain is Serine carboxypeptidase-like 50 (SCPL50) from Arabidopsis thaliana (Mouse-ear cress).